The following is an 81-amino-acid chain: Photosystem I iron-sulfur center (81 aa).

2 consecutive 4Fe-4S ferredoxin-type domains span residues 2–31 and 39–68; these read SHSVKIYDTCIGCTQCVRACPTDVLEMIPW and IASAPRTEDCVGCKRCESACPTDFLSVRVY. [4Fe-4S] cluster-binding residues include C11, C14, C17, C21, C48, C51, C54, and C58.

The eukaryotic PSI reaction center is composed of at least 11 subunits. The cofactor is [4Fe-4S] cluster.

The protein resides in the plastid. Its subcellular location is the chloroplast thylakoid membrane. The catalysed reaction is reduced [plastocyanin] + hnu + oxidized [2Fe-2S]-[ferredoxin] = oxidized [plastocyanin] + reduced [2Fe-2S]-[ferredoxin]. Apoprotein for the two 4Fe-4S centers FA and FB of photosystem I (PSI); essential for photochemical activity. FB is the terminal electron acceptor of PSI, donating electrons to ferredoxin. The C-terminus interacts with PsaA/B/D and helps assemble the protein into the PSI complex. Required for binding of PsaD and PsaE to PSI. PSI is a plastocyanin-ferredoxin oxidoreductase, converting photonic excitation into a charge separation, which transfers an electron from the donor P700 chlorophyll pair to the spectroscopically characterized acceptors A0, A1, FX, FA and FB in turn. In Spinacia oleracea (Spinach), this protein is Photosystem I iron-sulfur center.